The chain runs to 170 residues: CASP-like protein 1F1 (170 aa).

Residues 1–16 (MMGDNEGRRTPLLNLG) are Cytoplasmic-facing. A helical transmembrane segment spans residues 17-37 (VQVSMRVLTIGAAMASMWVMI). The Extracellular segment spans residues 38 to 62 (TNREVASVYGIAFEAKYSYSSAFRY). The helical transmembrane segment at 63–83 (LVYAQIAVCAATLFTLVWACL) threads the bilayer. Topologically, residues 84–88 (AVRRR) are cytoplasmic. The helical transmembrane segment at 89 to 109 (GLVFALFFFDLLTTLTAISAF) threads the bilayer. Topologically, residues 110–141 (SAAFAEGYVGKYGNKQAGWLPICGYVHGYCSR) are extracellular. The helical transmembrane segment at 142–162 (VTISLAMSFASFILLFILTVL) threads the bilayer. Topologically, residues 163–170 (TASAARHY) are cytoplasmic.

The protein belongs to the Casparian strip membrane proteins (CASP) family. As to quaternary structure, homodimer and heterodimers. As to expression, in flowers, expressed in the anther wall.

The protein resides in the cell membrane. The chain is CASP-like protein 1F1 from Arabidopsis thaliana (Mouse-ear cress).